The chain runs to 310 residues: Putative carbonic anhydrase 5 (310 aa).

The N-terminal stretch at 1 to 20 (MPSHLLVLSLLVALLVVVSC) is a signal peptide. One can recognise an Alpha-carbonic anhydrase domain in the interval 26-280 (HGWGYDENNG…LNGRRIQYRP (255 aa)). The Zn(2+) site is built by H117, H119, and H142. Residue 223–224 (TT) participates in substrate binding.

This sequence belongs to the alpha-carbonic anhydrase family.

It is found in the secreted. It carries out the reaction hydrogencarbonate + H(+) = CO2 + H2O. Reversible hydration of carbon dioxide. The protein is Putative carbonic anhydrase 5 (cah-5) of Caenorhabditis elegans.